The sequence spans 137 residues: Large ribosomal subunit protein eL28 (137 aa).

Ser2 bears the N-acetylserine mark. Glycyl lysine isopeptide (Lys-Gly) (interchain with G-Cter in SUMO2) cross-links involve residues Lys58 and Lys65. Ser115 carries the post-translational modification Phosphoserine.

Belongs to the eukaryotic ribosomal protein eL28 family. Component of the large ribosomal subunit.

The protein resides in the cytoplasm. Its function is as follows. Component of the large ribosomal subunit. The ribosome is a large ribonucleoprotein complex responsible for the synthesis of proteins in the cell. In Homo sapiens (Human), this protein is Large ribosomal subunit protein eL28 (RPL28).